The chain runs to 295 residues: Cyclin-G1 (295 aa).

It belongs to the cyclin family. Cyclin G subfamily.

It is found in the nucleus. Functionally, may play a role in growth regulation. Is associated with G2/M phase arrest in response to DNA damage. May be an intermediate by which p53 mediates its role as an inhibitor of cellular proliferation. The chain is Cyclin-G1 (CCNG1) from Bos taurus (Bovine).